Consider the following 43-residue polypeptide: Large ribosomal subunit protein bL32 (43 aa).

Belongs to the bacterial ribosomal protein bL32 family.

This chain is Large ribosomal subunit protein bL32 (rpmF), found in Carsonella ruddii (strain PV).